Here is a 630-residue protein sequence, read N- to C-terminus: Protein mono-ADP-ribosyltransferase PARP6 (630 aa).

C237 bears the ADP-ribosylcysteine mark. A PARP catalytic domain is found at 394-620 (EMTQGSYLEI…QDPKIQKEIM (227 aa)). D600 bears the ADP-ribosyl aspartic acid mark.

Belongs to the ARTD/PARP family. Post-translationally, auto-mono-ADP-ribosylated.

It carries out the reaction L-aspartyl-[protein] + NAD(+) = 4-O-(ADP-D-ribosyl)-L-aspartyl-[protein] + nicotinamide. It catalyses the reaction L-cysteinyl-[protein] + NAD(+) = S-(ADP-D-ribosyl)-L-cysteinyl-[protein] + nicotinamide + H(+). In terms of biological role, mono-ADP-ribosyltransferase that mediates mono-ADP-ribosylation of target proteins. The chain is Protein mono-ADP-ribosyltransferase PARP6 from Homo sapiens (Human).